We begin with the raw amino-acid sequence, 451 residues long: Putative metabolite transport protein YyaJ (451 aa).

Residues 1 to 29 (MNTIFKQKNTHPFSNAANRLDRLPISRVH) are Cytoplasmic-facing. Residues 30 to 50 (FQVLTALGIVYFFDLADLFTL) form a helical membrane-spanning segment. At 51–60 (SNVAPALIEH) the chain is on the extracellular side. Residues 61–81 (WGIPLSTIANVTAASFLGMFL) traverse the membrane as a helical segment. The Cytoplasmic portion of the chain corresponds to 82–97 (GASLGGRLSDRIGRKK). A helical membrane pass occupies residues 98–118 (ALNLFVFVFSIASLCNAAAWD). Over 119 to 124 (IPSLMT) the chain is Extracellular. A helical membrane pass occupies residues 125–145 (FRFLTGFGVAAAMVITNSYLA). Topologically, residues 146–157 (EFFPSSVRGKYI) are cytoplasmic. The chain crosses the membrane as a helical span at residues 158-178 (SFCAMIGLIGVPITNIVSAFV). Topologically, residues 179–182 (IPLG) are extracellular. Residues 183–203 (SWGWRLVFVWGAVGLIYFFFI) form a helical membrane-spanning segment. The Cytoplasmic segment spans residues 204-270 (HRLEESPRWH…LLKGRNLKIT (67 aa)). A helical transmembrane segment spans residues 271–291 (IVLSAVWIFETFGFYGFASWV). Residues 292–305 (PSLLKSNGVTMENT) are Extracellular-facing. The chain crosses the membrane as a helical span at residues 306-326 (LWYNVLHSVGAPLGALLGSMI). Over 327–333 (SERFQRK) the chain is Cytoplasmic. Residues 334–354 (WILAASAFLTAIAGLLYGMTF) form a helical membrane-spanning segment. The Extracellular segment spans residues 355–357 (IPI). The helical transmembrane segment at 358–378 (MIIVFGFIVNITERVFTSNLY) threads the bilayer. Residues 379–396 (AYTSEPYPTEYRSSGSGL) lie on the Cytoplasmic side of the membrane. The chain crosses the membrane as a helical span at residues 397-417 (AYGLGRFSNIFGSLLVGFIAV). At 418 to 421 (QLGY) the chain is on the extracellular side. The helical transmembrane segment at 422–442 (ISVFLFIGGCWLACSLLLIFF) threads the bilayer. The Cytoplasmic portion of the chain corresponds to 443-451 (GPNTNAKQI).

Belongs to the major facilitator superfamily. Sugar transporter (TC 2.A.1.1) family.

It is found in the cell membrane. The polypeptide is Putative metabolite transport protein YyaJ (yyaJ) (Bacillus subtilis (strain 168)).